We begin with the raw amino-acid sequence, 471 residues long: Proline and serine-rich protein 2 (471 aa).

Disordered regions lie at residues 1 to 46 and 82 to 247; these read MPGN…SFTM and CDSG…GDHV. Low complexity predominate over residues 26-43; that stretch reads LSRGGSLESRCSSSRSRS. Ser43 is modified (phosphoserine). The residue at position 45 (Thr45) is a Phosphothreonine. Residues 90–101 show a composition bias toward low complexity; it reads SPQSLEESPSSH. Over residues 154–177 the composition is skewed to pro residues; sequence LPPPDSRGPEVFPLPPSLPVPAPS. 3 positions are modified to phosphoserine: Ser187, Ser220, and Ser223. Arg263 carries the asymmetric dimethylarginine; alternate modification. Residue Arg263 is modified to Omega-N-methylarginine; alternate. 2 disordered regions span residues 310–365 and 383–437; these read DTSS…TEQP and PSSF…RAVG. The segment covering 313–324 has biased composition (basic and acidic residues); sequence SEERWQKAEEQR. 2 stretches are compositionally biased toward polar residues: residues 354–364 and 383–393; these read AQQSRAVQTEQ and PSSFVPTSKTI. Positions 415–427 are enriched in basic and acidic residues; that stretch reads YEPRPDGSQDARK. Position 431 is a phosphoserine (Ser431). Arg450 bears the Omega-N-methylarginine mark.

The sequence is that of Proline and serine-rich protein 2 (Proser2) from Mus musculus (Mouse).